The chain runs to 46 residues: Cuticle protein 4.9 (46 aa).

Its function is as follows. Component of the cuticle of migratory locust which contains more than 100 different structural proteins. The chain is Cuticle protein 4.9 from Locusta migratoria (Migratory locust).